The following is a 359-amino-acid chain: Proton-coupled zinc antiporter SLC30A2 (359 aa).

Residues 1-56 lie on the Cytoplasmic side of the membrane; that stretch reads MASRSFFGALWKSEASRIPPVNLPSVELAVQSNHYCHAQKDSGSHPNSEKQRARRK. A Mitochondrial localization signal motif is present at residues 34 to 37; it reads HYCH. Cysteine 36 serves as a coordination point for Zn(2+). The helical transmembrane segment at 57-77 threads the bilayer; it reads LYVASAICLVFMIGEIIGGYL. The Lumenal portion of the chain corresponds to 78 to 86; sequence AQSLAIMTD. A helical transmembrane segment spans residues 87–107; it reads AAHLLTDFASMLISLFSLWVS. Zn(2+) is bound by residues histidine 89 and aspartate 93. The Cytoplasmic segment spans residues 108–123; sequence SRPATKTMNFGWQRAE. A helical membrane pass occupies residues 124 to 144; that stretch reads ILGALLSVLSIWVVTGVLVYL. Topologically, residues 145-159 are lumenal; it reads AVQRLISGDYEIKGD. A helical transmembrane segment spans residues 160–180; the sequence is TMLITSGCAVAVNIIMGLALH. The Cytoplasmic portion of the chain corresponds to 181-207; the sequence is QSGHGHSHGHSHEDSSQQQQNPSVRAA. A helical transmembrane segment spans residues 208–228; sequence FIHVVGDLLQSVGVLVAAYII. 2 residues coordinate Zn(2+): histidine 210 and aspartate 214. Residues 229-236 lie on the Lumenal side of the membrane; sequence YFKPEYKY. The helical transmembrane segment at 237–257 threads the bilayer; it reads VDPICTFLFSILVLGTTLTIL. Over 258 to 291 the chain is Cytoplasmic; sequence RDVILVLMEGTPKGVDFTTVKNLLLSVDGVEALH. The Lysosomal targeting motif motif lies at 281 to 282; the sequence is LL. A Phosphoserine modification is found at serine 283. The Zn(2+) site is built by histidine 291, histidine 308, and glutamate 342. The helical transmembrane segment at 292 to 312 threads the bilayer; sequence SLHIWALTVAQPVLSVHIAIA. Residues 313–359 are Lumenal-facing; sequence QNVDAQAVLKVARDRLQGKFNFHTMTIQIESYSEDMKSCQECQGPSE.

It belongs to the cation diffusion facilitator (CDF) transporter (TC 2.A.4) family. SLC30A subfamily. Homodimer. Interacts (via lysosomal targeting motif) with AP3D1; in AP-3-mediated transport to lysosomes. Interacts with TMEM163. In terms of processing, phosphorylated at Ser-283. Phosphorylation at Ser-283 prevents localization to lysosomes. Dephosphorylation of Ser-283 which triggers localization to lysosomes, accumulation of zinc into lysosomes and lysosomal-mediated cell death is induced by TNF-alpha. Detected in intestine, kidney, seminal vesicles and testis.

The protein localises to the cytoplasmic vesicle. It is found in the secretory vesicle membrane. It localises to the zymogen granule membrane. The protein resides in the endosome membrane. Its subcellular location is the lysosome membrane. The protein localises to the mitochondrion inner membrane. It catalyses the reaction Zn(2+)(in) + 2 H(+)(out) = Zn(2+)(out) + 2 H(+)(in). In terms of biological role, electroneutral proton-coupled antiporter concentrating zinc ions into a variety of intracellular organelles including endosomes, zymogen granules and mitochondria. Thereby, plays a crucial role in cellular zinc homeostasis to confer upon cells protection against its potential cytotoxicity. Regulates the zinc concentration of milk, through the transport of zinc ions into secretory vesicles of mammary cells. By concentrating zinc ions into lysosomes participates to lysosomal-mediated cell death during early mammary gland involution. In Rattus norvegicus (Rat), this protein is Proton-coupled zinc antiporter SLC30A2.